The primary structure comprises 319 residues: Phenoxybenzoate dioxygenase subunit beta (319 aa).

The 103-residue stretch at 7–109 folds into the FAD-binding FR-type domain; that stretch reads MAPVSLRIHA…DGPSNHFALD (103 aa). 113–223 lines the NAD(+) pocket; it reads PHAVFIAGGI…PARVHLEYFA (111 aa). In terms of domain architecture, 2Fe-2S ferredoxin-type spans 234–319; the sequence is FVVHLARSGR…SKTAELTLDL (86 aa). The [2Fe-2S] cluster site is built by C268, C273, C276, and C306.

Belongs to the PDR/VanB family. In terms of assembly, this dioxygenase system consists of two proteins: the alpha subunit (PobA) and a subunit (PobB) that acts as a ferredoxin and a ferredoxin reductase. It depends on FMN as a cofactor.

It participates in aromatic compound metabolism; carboxydiphenyl ether degradation. Degrades exclusively diarylether compounds having carboxyl groups in the 3- or 4-position. Yields a hemiacetal that spontaneously hydrolyzes to phenol and protocatechuate. The polypeptide is Phenoxybenzoate dioxygenase subunit beta (pobB) (Ectopseudomonas oleovorans (Pseudomonas oleovorans)).